A 608-amino-acid chain; its full sequence is UvrABC system protein C (608 aa).

The region spanning 18 to 96 (NQPGVYRMYN…IKKYKPRYNV (79 aa)) is the GIY-YIG domain. The region spanning 206-241 (KQVIDSLVQHMERASTDLRFEAAARYRDQISALNKV) is the UVR domain.

This sequence belongs to the UvrC family. Interacts with UvrB in an incision complex.

It is found in the cytoplasm. Functionally, the UvrABC repair system catalyzes the recognition and processing of DNA lesions. UvrC both incises the 5' and 3' sides of the lesion. The N-terminal half is responsible for the 3' incision and the C-terminal half is responsible for the 5' incision. This is UvrABC system protein C from Pseudoalteromonas atlantica (strain T6c / ATCC BAA-1087).